Reading from the N-terminus, the 238-residue chain is Transcription termination/antitermination protein NusG (238 aa).

The protein belongs to the NusG family.

In terms of biological role, participates in transcription elongation, termination and antitermination. This is Transcription termination/antitermination protein NusG from Mycobacterium tuberculosis (strain CDC 1551 / Oshkosh).